We begin with the raw amino-acid sequence, 513 residues long: Alpha-amylase mde5 (513 aa).

Residues Met-1 to Ala-25 form the signal peptide. An intrachain disulfide couples Cys-52 to Cys-60. Residue Trp-105 coordinates substrate. Asn-143 is a Ca(2+) binding site. His-144 is a substrate binding site. Asn-162 is a glycosylation site (N-linked (GlcNAc...) asparagine). An intrachain disulfide couples Cys-171 to Cys-184. 2 residues coordinate Ca(2+): Glu-182 and Asp-195. Arg-224 is a substrate binding site. Asp-226, His-230, and Glu-250 together coordinate Ca(2+). Asp-226 (nucleophile) is an active-site residue. A substrate-binding site is contributed by Lys-229–His-230. Glu-250 serves as the catalytic Proton donor. A substrate-binding site is contributed by Gly-254. Cys-260 and Cys-304 are disulfide-bonded. Asp-318 contacts substrate. Residue Asn-357 is glycosylated (N-linked (GlcNAc...) asparagine). Arg-365 contacts substrate. Cys-454 and Cys-488 are joined by a disulfide.

Belongs to the glycosyl hydrolase 13 family. It depends on Ca(2+) as a cofactor.

It is found in the endoplasmic reticulum. It carries out the reaction Endohydrolysis of (1-&gt;4)-alpha-D-glucosidic linkages in polysaccharides containing three or more (1-&gt;4)-alpha-linked D-glucose units.. This is Alpha-amylase mde5 (mde5) from Schizosaccharomyces pombe (strain 972 / ATCC 24843) (Fission yeast).